Here is a 515-residue protein sequence, read N- to C-terminus: Maturase K (515 aa).

It belongs to the intron maturase 2 family. MatK subfamily.

Its subcellular location is the plastid. It localises to the chloroplast. Functionally, usually encoded in the trnK tRNA gene intron. Probably assists in splicing its own and other chloroplast group II introns. This Pinus cembra (Swiss stone pine) protein is Maturase K.